The sequence spans 512 residues: Monocarboxylate transporter 14 (512 aa).

At methionine 1–aspartate 29 the chain is on the cytoplasmic side. The next 12 membrane-spanning stretches (helical) occupy residues isoleucine 30–methionine 50, tryptophan 76–isoleucine 96, alanine 105–valine 125, phenylalanine 129–valine 149, leucine 161–leucine 181, alanine 193–methionine 211, methionine 317–isoleucine 337, phenylalanine 355–valine 375, isoleucine 381–leucine 401, leucine 410–valine 430, isoleucine 446–phenylalanine 466, and phenylalanine 476–isoleucine 496. Residues glutamine 497 to valine 512 lie on the Cytoplasmic side of the membrane.

It belongs to the major facilitator superfamily. Monocarboxylate porter (TC 2.A.1.13) family.

It is found in the cell membrane. Proton-linked monocarboxylate transporter. May catalyze the transport of monocarboxylates across the plasma membrane. This is Monocarboxylate transporter 14 (Slc16a14) from Mus musculus (Mouse).